A 361-amino-acid chain; its full sequence is Divinyl chlorophyll a/b light-harvesting protein PcbD (361 aa).

The next 6 membrane-spanning stretches (helical) occupy residues 27–47, 93–113, 140–160, 201–221, 248–268, and 315–335; these read FIAS…GSTL, IVHL…GILF, FILG…VEWA, VMGG…FHIV, AVLS…AFWC, and LTNV…WHAL.

Belongs to the PsbB/PsbC family. IsiA/Pcb subfamily. As to quaternary structure, the antenna complex consists of divinyl chlorophylls (a and b) and divinyl chlorophyll a/b binding proteins and binds more divinyl chlorophyll b than does the antenna complex from high-light-adapted Prochlorococcus. It depends on divinyl chlorophyll a as a cofactor. Requires divinyl chlorophyll b as cofactor.

The protein resides in the cellular thylakoid membrane. The antenna complex functions as a light receptor, it captures and delivers excitation energy to photosystems II and I. The Prochlorales pcb genes are not related to higher plant LHCs. The protein is Divinyl chlorophyll a/b light-harvesting protein PcbD (pcbD) of Prochlorococcus marinus (strain SARG / CCMP1375 / SS120).